Consider the following 310-residue polypeptide: Ribosomal RNA small subunit methyltransferase H (310 aa).

S-adenosyl-L-methionine is bound by residues 33–35, Asp53, Phe79, Asp100, and Gln107; that span reads AGH.

This sequence belongs to the methyltransferase superfamily. RsmH family.

The protein resides in the cytoplasm. The enzyme catalyses cytidine(1402) in 16S rRNA + S-adenosyl-L-methionine = N(4)-methylcytidine(1402) in 16S rRNA + S-adenosyl-L-homocysteine + H(+). Its function is as follows. Specifically methylates the N4 position of cytidine in position 1402 (C1402) of 16S rRNA. This Desulfitobacterium hafniense (strain DSM 10664 / DCB-2) protein is Ribosomal RNA small subunit methyltransferase H.